The primary structure comprises 150 residues: Globin (150 aa).

A Globin domain is found at 11 to 150 (PLSAAEKTKI…MICILLRSAY (140 aa)). Heme b is bound by residues His-74 and His-106.

The protein belongs to the globin family. As to quaternary structure, monomer.

The protein is Globin of Lampetra fluviatilis (European river lamprey).